The sequence spans 233 residues: Large ribosomal subunit protein bL19c (233 aa).

The transit peptide at 1 to 77 (MASKVLPQAL…FPARNSFVVR (77 aa)) directs the protein to the chloroplast.

As to quaternary structure, component of the chloroplast large ribosomal subunit (LSU). Mature 70S chloroplast ribosomes of higher plants consist of a small (30S) and a large (50S) subunit. The 30S small subunit contains 1 molecule of ribosomal RNA (16S rRNA) and 24 different proteins. The 50S large subunit contains 3 rRNA molecules (23S, 5S and 4.5S rRNA) and 33 different proteins.

It is found in the plastid. The protein localises to the chloroplast. In terms of biological role, component of the chloroplast ribosome (chloro-ribosome), a dedicated translation machinery responsible for the synthesis of chloroplast genome-encoded proteins, including proteins of the transcription and translation machinery and components of the photosynthetic apparatus. The protein is Large ribosomal subunit protein bL19c (RPL19) of Spinacia oleracea (Spinach).